Consider the following 165-residue polypeptide: PRPTRPDKARRLGYKAKQGYVIYRVRVRRGGRKRPVPKGATYGKPVHHGVNQLKFARSLQSVAEERAGRHCGALRVLNSYWVGEDSTYKFFEVILIDPFHKRIRRNPDTQWITKPVHKHREMRGLTSAGRKSRGLGKGHKFHHTIGGSRRAAWRRRNTLQLHRYR.

A disordered region spans residues 126 to 147 (TSAGRKSRGLGKGHKFHHTIGG). Residues 130-143 (RKSRGLGKGHKFHH) show a composition bias toward basic residues.

It belongs to the eukaryotic ribosomal protein eL15 family. Component of the large ribosomal subunit.

Its subcellular location is the cytoplasm. In terms of biological role, component of the large ribosomal subunit. The ribosome is a large ribonucleoprotein complex responsible for the synthesis of proteins in the cell. This Gallus gallus (Chicken) protein is Large ribosomal subunit protein eL15 (RPL15).